We begin with the raw amino-acid sequence, 341 residues long: MNENEYDNFDDLDDLLDEDPTKLDEQSPMMCKRRFCVHDSENKEKNAESKDSDGVQVANESEEDPELKEMMVDLQNEFANLMKNNGNENNVKTEDFNKLISALEEAAKVPRQQMEQGSSSLKSNSTDKGTLNGSNPGFKNIVSNTLDRLKENGNKVDTSLAEETKESQRSGQNNNIDDILSQLLDQMVASGGKESAENQFDLKDGEMDDAITKILDQMTSKEVLYEPMKEMRSEFGVWFQENGENEEHKEKIGTYKRQFNIVDEIVNIYELKDYDELKHKDRVTELLDELEQLGDSPIRSANSPLKHGNEEEELMKMLEIDGNDPNLGNLDKELTDGCKQQ.

Residues 1–18 show a composition bias toward acidic residues; the sequence is MNENEYDNFDDLDDLLDE. Disordered regions lie at residues 1 to 26, 39 to 66, 109 to 141, 293 to 312, and 318 to 341; these read MNEN…LDEQ, DSEN…EDPE, VPRQ…FKNI, LGDS…NEEE, and LEID…CKQQ. The segment covering 39-53 has biased composition (basic and acidic residues); sequence DSENKEKNAESKDSD. Serine 61 carries the post-translational modification Phosphoserine. Residues 113–141 show a composition bias toward polar residues; it reads QMEQGSSSLKSNSTDKGTLNGSNPGFKNI. Serine 303 is subject to Phosphoserine. The segment covering 330–341 has biased composition (basic and acidic residues); it reads LDKELTDGCKQQ. Cysteine 338 carries the post-translational modification Cysteine methyl ester. Cysteine 338 is lipidated: S-farnesyl cysteine. The propeptide at 339-341 is removed in mature form; that stretch reads KQQ.

Belongs to the peroxin-19 family. Interacts (farnesylated) with PEX3; farnesylation is required for this interaction. Interacts with PEX2, PEX5, PEX10, PEX11, PEX12, PEX13, PEX14, PEX17, PEX22, PEX25, PEX30 and PEX32; the interaction requires well-defined PEX19-binding sites within the peroxisomal membrane protein targeting signal (mPTS) of the PMPs and is independent on the presence of PEX3. Interacts with VPS1.

It is found in the cytoplasm. The protein resides in the peroxisome membrane. Its subcellular location is the endoplasmic reticulum membrane. In terms of biological role, required for proper post-translational import and stabilization of peroxisomal membrane proteins (PMPs). Acts as a cytosolic import receptor for PMPs and delivers them to the docking factor PEX3 at the peroxisomal membrane for subsequent insertion into the membrane. Acts as a chaperone in stabilizing or maintaining PMPs in the lipid bilayer. Directs PEX17, a peripheral component of the peroxisomal matrix protein translocation machinery, to peroxisomes. Stabilizes VPS1, a protein required for peroxisomal fission, at the peroxisomal membrane. Also acts in conjunction with PEX3 in the formation of peroxisomes from preperoxisomal compartments at the endoplasmic reticulum during de novo peroxisome synthesis, probably via the import of additional PMPs. This Saccharomyces cerevisiae (strain YJM789) (Baker's yeast) protein is Peroxisomal membrane protein import receptor PEX19 (PEX19).